The primary structure comprises 563 residues: UvrABC system protein C (563 aa).

One can recognise a GIY-YIG domain in the interval 12–87 (NKSGVYIFKK…IYKYKPKYNA (76 aa)). Positions 194 to 229 (SNVISFIKLKMEQHARLLDFENAAKYRDILLNFNKV) constitute a UVR domain.

This sequence belongs to the UvrC family. In terms of assembly, interacts with UvrB in an incision complex.

The protein localises to the cytoplasm. The UvrABC repair system catalyzes the recognition and processing of DNA lesions. UvrC both incises the 5' and 3' sides of the lesion. The N-terminal half is responsible for the 3' incision and the C-terminal half is responsible for the 5' incision. This is UvrABC system protein C from Fervidobacterium nodosum (strain ATCC 35602 / DSM 5306 / Rt17-B1).